Consider the following 500-residue polypeptide: Maturase K (500 aa).

Belongs to the intron maturase 2 family. MatK subfamily.

Its subcellular location is the plastid. It localises to the chloroplast. Usually encoded in the trnK tRNA gene intron. Probably assists in splicing its own and other chloroplast group II introns. The protein is Maturase K of Adiantum capillus-veneris (Maidenhair fern).